The following is a 300-amino-acid chain: MRDPVLFAIPCFLLLLILEWTAARKLESIETAATGQPRPASGAYLTRDSVASISMGLVSIATTAGWKSLALLGYAAIYAYLAPWQLSAHRWYTWVIAIVGVDLLYYSYHRIAHRVRLIWATHQAHHSSEYFNFATALRQKWNNSGEILMWVPLPLMGLPPWMVFCSWSLNLIYQFWVHTERIDRLPRWFEFVFNTPSHHRVHHGMDPVYLDKNYGGILIIWDRLFGSFQPELFRPHYGLTKRVDTFNIWKLQTREYVAIVRDWRSATRLRDRLGYVFGPPGWEPRTIDKSNAAASLVTSR.

Helical transmembrane passes span 3–23, 68–88, 91–111, and 147–167; these read DPVLFAIPCFLLLLILEWTAA, SLALLGYAAIYAYLAPWQLSA, WYTWVIAIVGVDLLYYSYHRI, and ILMWVPLPLMGLPPWMVFCSW. A Fatty acid hydroxylase domain is found at 94–227; that stretch reads WVIAIVGVDL…LIIWDRLFGS (134 aa).

The protein belongs to the sterol desaturase family.

The protein localises to the cell membrane. The sequence is that of C-5 sterol desaturase (erg3) from Mycobacterium bovis (strain ATCC BAA-935 / AF2122/97).